A 316-amino-acid chain; its full sequence is Deoxyribonuclease-1-like 1 (316 aa).

The first 28 residues, 1–28 (MHSSGGFQKAIHGHALLLLLLLASGAET), serve as a signal peptide directing secretion. Catalysis depends on residues glutamate 107 and histidine 158. Cysteine 197 and cysteine 234 are joined by a disulfide. An N-linked (GlcNAc...) asparagine glycan is attached at asparagine 271.

It belongs to the DNase I family.

The protein resides in the endoplasmic reticulum. The protein is Deoxyribonuclease-1-like 1 (DNASE1L1) of Bos taurus (Bovine).